The following is a 276-amino-acid chain: Bis(5'-nucleosyl)-tetraphosphatase, symmetrical (276 aa).

It belongs to the Ap4A hydrolase family.

It carries out the reaction P(1),P(4)-bis(5'-adenosyl) tetraphosphate + H2O = 2 ADP + 2 H(+). Hydrolyzes diadenosine 5',5'''-P1,P4-tetraphosphate to yield ADP. This chain is Bis(5'-nucleosyl)-tetraphosphatase, symmetrical, found in Legionella pneumophila subsp. pneumophila (strain Philadelphia 1 / ATCC 33152 / DSM 7513).